We begin with the raw amino-acid sequence, 346 residues long: 3',5'-cyclic-nucleotide phosphodiesterase (346 aa).

This sequence belongs to the cyclic nucleotide phosphodiesterase class-II family.

The catalysed reaction is a nucleoside 3',5'-cyclic phosphate + H2O = a nucleoside 5'-phosphate + H(+). The polypeptide is 3',5'-cyclic-nucleotide phosphodiesterase (cgs2) (Schizosaccharomyces pombe (strain 972 / ATCC 24843) (Fission yeast)).